We begin with the raw amino-acid sequence, 772 residues long: Probable beta-glucosidase M (772 aa).

Positions 1-20 (MLTSWGKTGFVLALALGGRA) are cleaved as a signal peptide. Asn259 is a glycosylation site (N-linked (GlcNAc...) asparagine). Asp287 is a catalytic residue. Residues Asn315, Asn322, Asn438, Asn523, Asn547, Asn574, and Asn586 are each glycosylated (N-linked (GlcNAc...) asparagine).

It belongs to the glycosyl hydrolase 3 family.

The protein localises to the secreted. It catalyses the reaction Hydrolysis of terminal, non-reducing beta-D-glucosyl residues with release of beta-D-glucose.. It functions in the pathway glycan metabolism; cellulose degradation. In terms of biological role, beta-glucosidases are one of a number of cellulolytic enzymes involved in the degradation of cellulosic biomass. Catalyzes the last step releasing glucose from the inhibitory cellobiose. The sequence is that of Probable beta-glucosidase M (bglM) from Emericella nidulans (strain FGSC A4 / ATCC 38163 / CBS 112.46 / NRRL 194 / M139) (Aspergillus nidulans).